A 44-amino-acid chain; its full sequence is DVCDSLVGGHCIHNGCWCDQDAPHGNCCDTGGCVWWWCPGTKWD.

Cystine bridges form between cysteine 3-cysteine 16, cysteine 11-cysteine 28, cysteine 18-cysteine 33, and cysteine 27-cysteine 38. At tryptophan 17 the chain carries 6'-bromotryptophan. 4-hydroxyproline is present on proline 23. 6'-bromotryptophan occurs at positions 36 and 37. A 4-hydroxyproline modification is found at proline 39. The residue at position 43 (tryptophan 43) is a 6'-bromotryptophan.

Expressed by the venom duct.

It localises to the secreted. Functionally, mu-conotoxins block voltage-gated sodium channels. This toxin reversibly blocks voltage-gated sodium channel in cephalopods, with no alteration in the voltage dependence of sodium conductance or on the kinetics of inactivation. The polypeptide is Mu-conotoxin-like Cal 12.1.1e (Californiconus californicus (California cone)).